The primary structure comprises 390 residues: Heme chaperone HemW (390 aa).

One can recognise a Radical SAM core domain in the interval 15–254 (PMPGQPFGVY…DARLSAAGFA (240 aa)). Y24 is an S-adenosyl-L-methionine binding site. [4Fe-4S] cluster-binding residues include C30, C34, and C37. S-adenosyl-L-methionine-binding positions include G82, 83–84 (GT), E115, Q142, R154, and D179.

The protein belongs to the anaerobic coproporphyrinogen-III oxidase family. HemW subfamily. It depends on [4Fe-4S] cluster as a cofactor.

It localises to the cytoplasm. In terms of biological role, probably acts as a heme chaperone, transferring heme to an unknown acceptor. Binds one molecule of heme per monomer, possibly covalently. Binds 1 [4Fe-4S] cluster. The cluster is coordinated with 3 cysteines and an exchangeable S-adenosyl-L-methionine. The chain is Heme chaperone HemW from Mycobacterium tuberculosis (strain CDC 1551 / Oshkosh).